Consider the following 306-residue polypeptide: Small ribosomal subunit protein uS2 (306 aa).

The segment covering 229–238 (GEESAAEERP) has biased composition (basic and acidic residues). The interval 229-306 (GEESAAEERP…VGEGDESEER (78 aa)) is disordered. Acidic residues predominate over residues 261-287 (QPGEPEAEAFEEAAGEPEDSTEEEAAE).

Belongs to the universal ribosomal protein uS2 family.

This Rubrobacter xylanophilus (strain DSM 9941 / JCM 11954 / NBRC 16129 / PRD-1) protein is Small ribosomal subunit protein uS2.